Consider the following 394-residue polypeptide: Actin-related protein 2 (394 aa).

Methionine 1 carries the N-acetylmethionine modification. ATP-binding positions include 160-162 and 214-218; these read GDG and RMIKE. Lysine 299 bears the N6-acetyllysine mark. 305–310 is a binding site for ATP; it reads GGSTMY. Lysine 322 carries the post-translational modification N6-acetyllysine.

This sequence belongs to the actin family. ARP2 subfamily. In terms of assembly, component of the Arp2/3 complex composed of ACTR2/ARP2, ACTR3/ARP3, ARPC1B/p41-ARC, ARPC2/p34-ARC, ARPC3/p21-ARC, ARPC4/p20-ARC and ARPC5/p16-ARC. Interacts with AVIL.

It is found in the cytoplasm. Its subcellular location is the cytoskeleton. The protein resides in the cell projection. The protein localises to the nucleus. ATP-binding component of the Arp2/3 complex, a multiprotein complex that mediates actin polymerization upon stimulation by nucleation-promoting factor (NPF). The Arp2/3 complex mediates the formation of branched actin networks in the cytoplasm, providing the force for cell motility. Seems to contact the pointed end of the daughter actin filament. In podocytes, required for the formation of lamellipodia downstream of AVIL and PLCE1 regulation. In addition to its role in the cytoplasmic cytoskeleton, the Arp2/3 complex also promotes actin polymerization in the nucleus, thereby regulating gene transcription and repair of damaged DNA. The Arp2/3 complex promotes homologous recombination (HR) repair in response to DNA damage by promoting nuclear actin polymerization, leading to drive motility of double-strand breaks (DSBs). In Pongo abelii (Sumatran orangutan), this protein is Actin-related protein 2 (ACTR2).